The following is a 151-amino-acid chain: UPF0178 protein Tcr_1995 (151 aa).

The disordered stretch occupies residues 116 to 135 (RSSGVDTGGPPPLNQKDRQA).

This sequence belongs to the UPF0178 family.

This chain is UPF0178 protein Tcr_1995, found in Hydrogenovibrio crunogenus (strain DSM 25203 / XCL-2) (Thiomicrospira crunogena).